The sequence spans 103 residues: MIPGEYHVASEPIDYNGGYEAISLEVKNVGDRAAQVGSHYHFYEANEAGLQFDREKARGKRLDIPAGTAIRFEPGETKTVQLIDFGGKRRIFGFNNKVNGFLD.

This sequence belongs to the urease beta subunit family. In terms of assembly, heterotrimer of UreA (gamma), UreB (beta) and UreC (alpha) subunits. Three heterotrimers associate to form the active enzyme.

It is found in the cytoplasm. It carries out the reaction urea + 2 H2O + H(+) = hydrogencarbonate + 2 NH4(+). It functions in the pathway nitrogen metabolism; urea degradation; CO(2) and NH(3) from urea (urease route): step 1/1. Its function is as follows. Ureolysis may allow urea to be employed as a nitrogen source for growth and produces ammonia which may protect from killing at low pH. The chain is Urease subunit beta from Streptococcus salivarius (strain 57.I).